The following is a 350-amino-acid chain: Putative ATP-binding protein BruAb2_0487 (350 aa).

The ABC transporter domain maps to 4–234 (VSLRGISKTF…PANKFVAGFI (231 aa)). 36-43 (GPSGCGKS) serves as a coordination point for ATP.

It belongs to the ABC transporter superfamily. The complex is composed of two ATP-binding proteins (BruAb2_0487), two transmembrane proteins (BruAb2_0483) and a solute-binding protein (BruAb2_0484).

It localises to the cell inner membrane. Functionally, probably part of an ABC transporter complex. Probably responsible for energy coupling to the transport system. In Brucella abortus biovar 1 (strain 9-941), this protein is Putative ATP-binding protein BruAb2_0487.